Consider the following 288-residue polypeptide: Energy-coupling factor transporter ATP-binding protein EcfA2 (288 aa).

The ABC transporter domain occupies 2–244 (IKFEKVNYTY…VDFLKAHELG (243 aa)). 39-46 (GHTGSGKS) contributes to the ATP binding site.

It belongs to the ABC transporter superfamily. Energy-coupling factor EcfA family. Forms a stable energy-coupling factor (ECF) transporter complex composed of 2 membrane-embedded substrate-binding proteins (S component), 2 ATP-binding proteins (A component) and 2 transmembrane proteins (T component).

The protein localises to the cell membrane. In terms of biological role, ATP-binding (A) component of a common energy-coupling factor (ECF) ABC-transporter complex. Unlike classic ABC transporters this ECF transporter provides the energy necessary to transport a number of different substrates. This is Energy-coupling factor transporter ATP-binding protein EcfA2 from Lactococcus lactis subsp. lactis (strain IL1403) (Streptococcus lactis).